A 90-amino-acid chain; its full sequence is DNA-directed RNA polymerase subunit omega (90 aa).

It belongs to the RNA polymerase subunit omega family. In terms of assembly, the RNAP catalytic core consists of 2 alpha, 1 beta, 1 beta' and 1 omega subunit. When a sigma factor is associated with the core the holoenzyme is formed, which can initiate transcription.

The catalysed reaction is RNA(n) + a ribonucleoside 5'-triphosphate = RNA(n+1) + diphosphate. Functionally, promotes RNA polymerase assembly. Latches the N- and C-terminal regions of the beta' subunit thereby facilitating its interaction with the beta and alpha subunits. Required for kasugamycin production and aerial mycelium formation in S.kasugaensis and responsible for pleiotropy. This chain is DNA-directed RNA polymerase subunit omega (rpoZ), found in Streptomyces kasugaensis.